The sequence spans 385 residues: Enoyl-[acyl-carrier-protein] reductase, mitochondrial (385 aa).

Tyr78 acts as the Proton donor in catalysis. Residues Asn162, 190–193, 213–215, 288–291, 313–315, and Lys378 contribute to the NADP(+) site; these read TSGV, RDR, YGGM, and YWV.

The protein belongs to the zinc-containing alcohol dehydrogenase family. Quinone oxidoreductase subfamily. Homodimer.

It localises to the mitochondrion matrix. The catalysed reaction is a 2,3-saturated acyl-[ACP] + NADP(+) = a (2E)-enoyl-[ACP] + NADPH + H(+). Catalyzes the NADPH-dependent reduction of trans-2-enoyl thioesters in mitochondrial fatty acid synthesis (fatty acid synthesis type II). Fatty acid chain elongation in mitochondria uses acyl carrier protein (ACP) as an acyl group carrier, but the enzyme accepts both ACP and CoA thioesters as substrates in vitro. Required for respiration and the maintenance of the mitochondrial compartment. This chain is Enoyl-[acyl-carrier-protein] reductase, mitochondrial (ETR1), found in Candida glabrata (strain ATCC 2001 / BCRC 20586 / JCM 3761 / NBRC 0622 / NRRL Y-65 / CBS 138) (Yeast).